A 129-amino-acid chain; its full sequence is Small ribosomal subunit protein uS11 (129 aa).

The segment at 108 to 129 (EDVTPIPHDGTKPKGGKRGRRV) is disordered.

The protein belongs to the universal ribosomal protein uS11 family. In terms of assembly, part of the 30S ribosomal subunit.

In terms of biological role, located on the platform of the 30S subunit. The chain is Small ribosomal subunit protein uS11 from Methanothrix thermoacetophila (strain DSM 6194 / JCM 14653 / NBRC 101360 / PT) (Methanosaeta thermophila).